We begin with the raw amino-acid sequence, 91 residues long: Large ribosomal subunit protein bL31B (91 aa).

This sequence belongs to the bacterial ribosomal protein bL31 family. Type B subfamily. As to quaternary structure, part of the 50S ribosomal subunit.

The sequence is that of Large ribosomal subunit protein bL31B from Neisseria meningitidis serogroup A / serotype 4A (strain DSM 15465 / Z2491).